Consider the following 285-residue polypeptide: 2-dehydro-3-deoxyphosphooctonate aldolase (285 aa).

This sequence belongs to the KdsA family.

It localises to the cytoplasm. The catalysed reaction is D-arabinose 5-phosphate + phosphoenolpyruvate + H2O = 3-deoxy-alpha-D-manno-2-octulosonate-8-phosphate + phosphate. It functions in the pathway carbohydrate biosynthesis; 3-deoxy-D-manno-octulosonate biosynthesis; 3-deoxy-D-manno-octulosonate from D-ribulose 5-phosphate: step 2/3. It participates in bacterial outer membrane biogenesis; lipopolysaccharide biosynthesis. This chain is 2-dehydro-3-deoxyphosphooctonate aldolase, found in Acinetobacter baumannii (strain AB307-0294).